A 219-amino-acid polypeptide reads, in one-letter code: Vacuolar protein sorting-associated protein 32 homolog 2 (219 aa).

Coiled-coil stretches lie at residues 10–41 (KQEA…KKAG) and 117–176 (TNID…QLLQ). The interval 168–219 (EELESQLLQPATTAPPLPSVPVPAGRQPARPVPQKRTAEEEELAALQAEMAL) is disordered.

Belongs to the SNF7 family. Component of the endosomal sorting required for transport complex III (ESCRT-III), composed at least of VPS2, VPS20, VPS24 and VPS32. Interacts with SKD1. Interacts with BRO1/ALIX.

It localises to the endosome. Component of the ESCRT-III complex, which is required for multivesicular bodies (MVBs) formation and sorting of endosomal cargo proteins into MVBs. The ESCRT-III complex is probably involved in the concentration of MVB cargo. This chain is Vacuolar protein sorting-associated protein 32 homolog 2 (VPS32.2), found in Arabidopsis thaliana (Mouse-ear cress).